Here is a 384-residue protein sequence, read N- to C-terminus: MINNRSVIIGIVVGENSGDILGVGLIRSLKKCFKKVQFFGIGGFRMRSENMECWYDISELSIMGITGVIFRLPKLLNMRRELIKRFLKLKLNIFIGIDFPDFNISLEKRLKKYGITTIHYVSPSIWAWRSNRVFALKEATHNVLLLFPFEKSIYARCGIPNQFIGHPLADEIPLYPNKIALRQKFDIPSNRCCLAILPGSRPKEIQILTKIFMHCAKLLQDTIPNLEILIPLHDTDLINQFVTLTSFISVKFRVLHTLTAWEVMAAADAALLTSGTATLECMLAKCPMVVAYRMNPVIFMLIRHLIKVKWISLPNLLAGKPIVQEFIQKKCDPQRLASSLFYLLNYNQEQRTTLQQEFYHLHRSIKLHANDQATRLILKYINLL.

The protein belongs to the LpxB family.

It catalyses the reaction 2-N,3-O-bis[(3R)-3-hydroxytetradecanoyl]-alpha-D-glucosaminyl 1-phosphate + UDP-2-N,3-O-bis[(3R)-3-hydroxytetradecanoyl]-alpha-D-glucosamine = lipid A disaccharide (E. coli) + UDP + H(+). It carries out the reaction a lipid X + a UDP-2-N,3-O-bis[(3R)-3-hydroxyacyl]-alpha-D-glucosamine = a lipid A disaccharide + UDP + H(+). It participates in glycolipid biosynthesis; lipid IV(A) biosynthesis; lipid IV(A) from (3R)-3-hydroxytetradecanoyl-[acyl-carrier-protein] and UDP-N-acetyl-alpha-D-glucosamine: step 5/6. Functionally, condensation of UDP-2,3-diacylglucosamine and 2,3-diacylglucosamine-1-phosphate to form lipid A disaccharide, a precursor of lipid A, a phosphorylated glycolipid that anchors the lipopolysaccharide to the outer membrane of the cell. This chain is Lipid-A-disaccharide synthase, found in Blochmanniella floridana.